Reading from the N-terminus, the 292-residue chain is Elongation factor Ts (292 aa).

The segment at Thr-82–Val-85 is involved in Mg(2+) ion dislocation from EF-Tu.

It belongs to the EF-Ts family.

The protein localises to the cytoplasm. Associates with the EF-Tu.GDP complex and induces the exchange of GDP to GTP. It remains bound to the aminoacyl-tRNA.EF-Tu.GTP complex up to the GTP hydrolysis stage on the ribosome. The sequence is that of Elongation factor Ts from Bordetella parapertussis (strain 12822 / ATCC BAA-587 / NCTC 13253).